The following is a 223-amino-acid chain: Thiamine-phosphate synthase (223 aa).

4-amino-2-methyl-5-(diphosphooxymethyl)pyrimidine is bound by residues 37 to 41 (QLREK) and N69. The Mg(2+) site is built by D70 and D89. A 4-amino-2-methyl-5-(diphosphooxymethyl)pyrimidine-binding site is contributed by S108. A 2-[(2R,5Z)-2-carboxy-4-methylthiazol-5(2H)-ylidene]ethyl phosphate-binding site is contributed by 134-136 (TGT). K137 contacts 4-amino-2-methyl-5-(diphosphooxymethyl)pyrimidine. Residues G167 and 187–188 (VS) contribute to the 2-[(2R,5Z)-2-carboxy-4-methylthiazol-5(2H)-ylidene]ethyl phosphate site. A disordered region spans residues 197 to 223 (AAATRKLQGSVDTASVESQLPSEEPSA). The segment covering 206–217 (SVDTASVESQLP) has biased composition (polar residues).

The protein belongs to the thiamine-phosphate synthase family. The cofactor is Mg(2+).

It carries out the reaction 2-[(2R,5Z)-2-carboxy-4-methylthiazol-5(2H)-ylidene]ethyl phosphate + 4-amino-2-methyl-5-(diphosphooxymethyl)pyrimidine + 2 H(+) = thiamine phosphate + CO2 + diphosphate. It catalyses the reaction 2-(2-carboxy-4-methylthiazol-5-yl)ethyl phosphate + 4-amino-2-methyl-5-(diphosphooxymethyl)pyrimidine + 2 H(+) = thiamine phosphate + CO2 + diphosphate. The enzyme catalyses 4-methyl-5-(2-phosphooxyethyl)-thiazole + 4-amino-2-methyl-5-(diphosphooxymethyl)pyrimidine + H(+) = thiamine phosphate + diphosphate. It functions in the pathway cofactor biosynthesis; thiamine diphosphate biosynthesis; thiamine phosphate from 4-amino-2-methyl-5-diphosphomethylpyrimidine and 4-methyl-5-(2-phosphoethyl)-thiazole: step 1/1. Condenses 4-methyl-5-(beta-hydroxyethyl)thiazole monophosphate (THZ-P) and 2-methyl-4-amino-5-hydroxymethyl pyrimidine pyrophosphate (HMP-PP) to form thiamine monophosphate (TMP). The sequence is that of Thiamine-phosphate synthase from Haloquadratum walsbyi (strain DSM 16790 / HBSQ001).